We begin with the raw amino-acid sequence, 431 residues long: uncharacterized protein (431 aa).

2 disordered regions span residues 1-37 (MFWRRLRPGAQDLAPKGLPGDGDFRRSSDPRLPKLTP) and 102-132 (PPPLLSAGASRESAPRQPGPGERERPRRRVA). Residues 22-32 (GDFRRSSDPRL) are compositionally biased toward basic and acidic residues. Over residues 106-121 (LSAGASRESAPRQPGP) the composition is skewed to low complexity. Residues 122–132 (GERERPRRRVA) show a composition bias toward basic and acidic residues.

The protein localises to the cytoplasm. This is an uncharacterized protein from Homo sapiens (Human).